The sequence spans 193 residues: nitroreductase FRM2 (193 aa).

This sequence belongs to the nitroreductase family. The cofactor is FMN.

Its subcellular location is the cytoplasm. The protein localises to the nucleus. The catalysed reaction is 4-(hydroxyamino)quinoline N-oxide + 2 NAD(+) + H2O = 4-nitroquinoline N-oxide + 2 NADH + 2 H(+). In terms of biological role, type II nitroreductase, able to reduce 4-nitroquinoline N-oxide (4-NQO) into 4-aminoquinoline-N-oxide (4-AQO) via 4-hydroxyaminoquinoline (4-HAQO), using NADH as reductant. involved in the oxidative stress response. Plays a possible role in the metal stress response. Involved in negative regulation of fatty acid metabolism. This Saccharomyces cerevisiae (strain ATCC 204508 / S288c) (Baker's yeast) protein is nitroreductase FRM2.